The primary structure comprises 305 residues: N-acetylneuraminate lyase (305 aa).

Residues Thr51 and Thr52 each coordinate aceneuramate. Catalysis depends on Tyr143, which acts as the Proton donor. Residue Lys173 is the Schiff-base intermediate with substrate of the active site. Aceneuramate is bound by residues Thr175, Gly197, Asp199, Glu200, and Ser216.

This sequence belongs to the DapA family. NanA subfamily. As to quaternary structure, homotetramer.

It is found in the cytoplasm. It catalyses the reaction aceneuramate = aldehydo-N-acetyl-D-mannosamine + pyruvate. It functions in the pathway amino-sugar metabolism; N-acetylneuraminate degradation. Its function is as follows. Catalyzes the cleavage of N-acetylneuraminic acid (sialic acid) to form pyruvate and N-acetylmannosamine via a Schiff base intermediate. It prevents sialic acids from being recycled and returning to the cell surface. Involved in the N-glycolylneuraminic acid (Neu5Gc) degradation pathway. This is N-acetylneuraminate lyase from Xenopus tropicalis (Western clawed frog).